The following is a 167-amino-acid chain: Gem-associated protein 6 (167 aa).

The 68-residue stretch at Lys7–Gly74 folds into the Sm domain. Residues Glu69 to Gln167 enclose the AD domain. Phosphoserine occurs at positions 95 and 166.

As to quaternary structure, part of the core SMN complex that contains SMN1, GEMIN2/SIP1, DDX20/GEMIN3, GEMIN4, GEMIN5, GEMIN6, GEMIN7, GEMIN8 and STRAP/UNRIP. Part of the SMN-Sm complex that contains SMN1, GEMIN2/SIP1, DDX20/GEMIN3, GEMIN4, GEMIN5, GEMIN6, GEMIN7, GEMIN8, STRAP/UNRIP and the Sm proteins SNRPB, SNRPD1, SNRPD2, SNRPD3, SNRPE, SNRPF and SNRPG. Interacts with GEMIN7; the interaction is direct. Interacts with GEMIN8; the interaction is direct. Interacts with SNRPB, SNRPD2, SNRPD3 and SNRPE; the interaction is direct.

The protein localises to the nucleus. Its subcellular location is the nucleoplasm. The protein resides in the gem. It localises to the cytoplasm. Its function is as follows. The SMN complex catalyzes the assembly of small nuclear ribonucleoproteins (snRNPs), the building blocks of the spliceosome, and thereby plays an important role in the splicing of cellular pre-mRNAs. Most spliceosomal snRNPs contain a common set of Sm proteins SNRPB, SNRPD1, SNRPD2, SNRPD3, SNRPE, SNRPF and SNRPG that assemble in a heptameric protein ring on the Sm site of the small nuclear RNA to form the core snRNP (Sm core). In the cytosol, the Sm proteins SNRPD1, SNRPD2, SNRPE, SNRPF and SNRPG are trapped in an inactive 6S pICln-Sm complex by the chaperone CLNS1A that controls the assembly of the core snRNP. To assemble core snRNPs, the SMN complex accepts the trapped 5Sm proteins from CLNS1A forming an intermediate. Binding of snRNA inside 5Sm triggers eviction of the SMN complex, thereby allowing binding of SNRPD3 and SNRPB to complete assembly of the core snRNP. The sequence is that of Gem-associated protein 6 (GEMIN6) from Homo sapiens (Human).